The primary structure comprises 429 residues: Zinc-regulated GTPase metalloprotein activator 1 (429 aa).

A psi-PxLVp motif motif is present at residues 15–22; that stretch reads GELPCLVT. 78 to 85 serves as a coordination point for GTP; it reads GYLGSGKS. Zn(2+) contacts are provided by Cys-136, Cys-138, and Cys-139. A CXCC motif motif is present at residues 136–139; the sequence is CLCC. Residues 139–143 and 244–247 each bind GTP; these read CSLKN and NKYD. Positions 362–428 constitute a CobW C-terminal domain; that stretch reads RDWEVQRTKG…SIEELLRKTL (67 aa).

This sequence belongs to the SIMIBI class G3E GTPase family. ZNG1 subfamily.

It catalyses the reaction GTP + H2O = GDP + phosphate + H(+). Zinc chaperone that directly transfers zinc cofactor to target metalloproteins, thereby activating them. Catalyzes zinc insertion into the active site of methionine aminopeptidase MAP1, which function to cleave the initiator methionine from polypeptides during or after protein translation. Mechanistically, the N-terminal psi-PxLVp motif binds to the C6H2-type zinc finger of inactive form of MAP1. After formation of the docked complex, zinc is transferred from the CXCC motif in the GTPase domain of ZNG1 to the zinc binding site in the peptidase domain of MAP1 in a process requiring GTP hydrolysis. GTP/GDP exchange is required for release of active MAP1. This chain is Zinc-regulated GTPase metalloprotein activator 1, found in Saccharomyces cerevisiae (strain ATCC 204508 / S288c) (Baker's yeast).